We begin with the raw amino-acid sequence, 203 residues long: Small ribosomal subunit protein uS4 (203 aa).

An S4 RNA-binding domain is found at Arg93–Val156.

This sequence belongs to the universal ribosomal protein uS4 family. In terms of assembly, part of the 30S ribosomal subunit. Contacts protein S5. The interaction surface between S4 and S5 is involved in control of translational fidelity.

Its function is as follows. One of the primary rRNA binding proteins, it binds directly to 16S rRNA where it nucleates assembly of the body of the 30S subunit. With S5 and S12 plays an important role in translational accuracy. In Streptococcus thermophilus (strain CNRZ 1066), this protein is Small ribosomal subunit protein uS4.